We begin with the raw amino-acid sequence, 341 residues long: Foldase protein PrsA (341 aa).

Residues 1–22 (MKNIGRLAVTALIAVFIFSVTG) form the signal peptide. The N-palmitoyl cysteine moiety is linked to residue C23. The S-diacylglycerol cysteine moiety is linked to residue C23. Residues 199 to 291 (PNKMHLAHIL…FGYHIIKCIK (93 aa)) enclose the PpiC domain.

Belongs to the PrsA family.

The protein resides in the cell membrane. It carries out the reaction [protein]-peptidylproline (omega=180) = [protein]-peptidylproline (omega=0). Plays a major role in protein secretion by helping the post-translocational extracellular folding of several secreted proteins. This Clostridium kluyveri (strain NBRC 12016) protein is Foldase protein PrsA.